A 365-amino-acid polypeptide reads, in one-letter code: Pheromone M-factor receptor (365 aa).

The next 7 membrane-spanning stretches (helical) occupy residues 7-24 (FYQF…PILY), 31-54 (NIPC…ESAI), 73-100 (ITSR…DTVI), 116-133 (VCLS…MVPL), 155-182 (YTLL…VVLY), 204-226 (FLRL…IFMV), and 265-283 (VPPT…SGGW).

Belongs to the G-protein coupled receptor 4 family.

The protein localises to the membrane. Receptor for the peptide pheromone M-factor, a mating factor of S.pombe. Pheromone signaling is essential for initiation of meiosis in S.pombe; M-factor signaling alone may be sufficient. The polypeptide is Pheromone M-factor receptor (map3) (Schizosaccharomyces pombe (strain 972 / ATCC 24843) (Fission yeast)).